Reading from the N-terminus, the 327-residue chain is tRNA uridine(34) hydroxylase (327 aa).

The Rhodanese domain occupies 122 to 218; sequence QENRCLVLDV…YGLKMGTGKW (97 aa). Cys-178 serves as the catalytic Cysteine persulfide intermediate.

Belongs to the TrhO family.

The enzyme catalyses uridine(34) in tRNA + AH2 + O2 = 5-hydroxyuridine(34) in tRNA + A + H2O. Catalyzes oxygen-dependent 5-hydroxyuridine (ho5U) modification at position 34 in tRNAs. This chain is tRNA uridine(34) hydroxylase, found in Chlamydia trachomatis serovar L2 (strain ATCC VR-902B / DSM 19102 / 434/Bu).